The chain runs to 765 residues: Zinc finger and BTB domain-containing protein 49 (765 aa).

In terms of domain architecture, BTB spans 25 to 91 (CDCMLVVKGV…MYTSHLDLNQ (67 aa)). Disordered stretches follow at residues 165–203 (QQNK…GSCT) and 275–294 (NFLA…DATC). 7 consecutive C2H2-type zinc fingers follow at residues 395-417 (YACE…KRSH), 423-445 (FECN…LRRH), 451-473 (YICE…IIIH), 479-501 (HLCD…KKTH), 507-529 (FTCD…RIRH), 535-557 (YSCS…VRTH), and 563-585 (YTCE…KKMH).

The protein belongs to the krueppel C2H2-type zinc-finger protein family. In terms of assembly, isoform 1 interacts with EP300 and KAT5/Tip60. The interaction with EP300 is direct and leads to synergistic induction of CDKN1A. On the CDKN1A promoter, forms a complex with ZBTB17/Miz-1; this interaction leads to additive CDKN1A transactivation. Isoform 3 also interacts with ZBTB17; this interaction may block ZBTB17 repressor activity. In terms of tissue distribution, highly expressed in normal epidermis and in other epithelial tissues, including in colon and lung. Tends to be down-regulated in colon, lung and skin cancer tissues.

Its subcellular location is the cytoplasm. The protein resides in the nucleus. In terms of biological role, transcription factor. Inhibits cell proliferation by activating either CDKN1A/p21 transcription or RB1 transcription. Its function is as follows. Binds CDKN1A promoter and activates its transcription; this activity is further potentiated in the presence of EP300 (synergistic) and ZBTB17/Miz-1 (additive). Activates RB1 transcription most probably by antagonizing ZBTB17 repression of RB1. Does not bind directly RB1 promoter. The sequence is that of Zinc finger and BTB domain-containing protein 49 (ZBTB49) from Homo sapiens (Human).